The primary structure comprises 351 residues: Actin maturation protease (351 aa).

The span at 1–19 shows a compositional bias: pro residues; the sequence is MTSPCSPPLKPPISPPKTP. The interval 1-70 is disordered; that stretch reads MTSPCSPPLK…PPAATGPAPR (70 aa). A compositionally biased stretch (low complexity) spans 36-50; sequence LDFSALPSPPWSQQT. Pro residues predominate over residues 51–64; the sequence is PVPPPLPLPPPPAA. Residues 124–244 form a peptidase C39-like region; sequence SLIQEGPQCG…WAVSAGVLLG (121 aa). Cysteine 132 is a catalytic residue. Serine 316 carries the phosphoserine modification.

The protein belongs to the ACTMAP family. In terms of assembly, interacts (via N-terminus) with PFN2 isoforms IIa and IIb; the interactions may facilitate efficient cleavage of the acetylated N-terminus of immature actin. Interacts with PFN1.

It localises to the cytoplasm. The catalysed reaction is N-terminal N(alpha)-acetyl-L-methionyl-L-aspartyl-[protein] + H2O = N-terminal L-aspartyl-[protein] + N-acetyl-L-methionine. It catalyses the reaction N-terminal N(alpha)-acetyl-L-methionyl-L-glutamyl-[protein] + H2O = N-terminal L-glutamyl-[protein] + N-acetyl-L-methionine. It carries out the reaction N-terminal N(alpha)-acetyl-L-cysteinyl-L-aspartyl-[protein] + H2O = N-terminal L-aspartyl-[protein] + N-acetyl-L-cysteine. The enzyme catalyses N-terminal N(alpha)-acetyl-L-cysteinyl-L-glutamyl-[protein] + H2O = N-terminal L-glutamyl-[protein] + N-acetyl-L-cysteine. In terms of biological role, actin maturation protease that specifically mediates the cleavage of immature acetylated N-terminal actin, thereby contributing to actin maturation. Cleaves N-terminal acetylated methionine of immature cytoplasmic beta- and gamma-actins ACTB and ACTG1 after translation. Cleaves N-terminal acetylated cysteine of muscle alpha-actins ACTA1, ACTC1 and ACTA2 after canonical removal of N-terminal methionine. This is Actin maturation protease from Homo sapiens (Human).